The following is a 474-amino-acid chain: Coronin-1C (474 aa).

WD repeat units lie at residues 78-118, 128-168, 172-202, 215-249, and 263-303; these read GHTG…LTLS, GHSK…ALIN, MHSD…RVID, AHEG…ALWN, and DTSN…PYVH. Residues 435–474 adopt a coiled-coil conformation; it reads VQNEAKLDEILKEIKSIKETICSQDERISKLEQQLAKMAA. K446 carries the post-translational modification N6-acetyllysine.

The protein belongs to the WD repeat coronin family. In terms of assembly, homotrimer. Binds F-actin. Interacts with RCC2. Interacts preferentially with nucleotide-free and GDP-bound RAC1. Interacts with VIM (via head domain). Interacts with MICAL2; this interaction recruits MICAL2 to the actin filaments. As to expression, detected in skeletal muscle (at protein level). Detected in fibroblasts (at protein level). Ubiquitous.

The protein resides in the cell membrane. Its subcellular location is the cell projection. The protein localises to the lamellipodium. It localises to the ruffle membrane. It is found in the cytoplasm. The protein resides in the cytoskeleton. Its subcellular location is the cell cortex. The protein localises to the endosome membrane. In terms of biological role, plays a role in directed cell migration by regulating the activation and subcellular location of RAC1. Increases the presence of activated RAC1 at the leading edge of migrating cells. Required for normal organization of the cytoskeleton, including the actin cytoskeleton, microtubules and the vimentin intermediate filaments. Required for normal cell proliferation, cell migration, and normal formation of lamellipodia. Plays a role in endoplasmic reticulum-associated endosome fission: localizes to endosome membrane tubules and promotes recruitment of TMCC1, leading to recruitment of the endoplasmic reticulum to endosome tubules for fission. Endosome membrane fission of early and late endosomes is essential to separate regions destined for lysosomal degradation from carriers to be recycled to the plasma membrane. Required for normal distribution of mitochondria within cells. The chain is Coronin-1C (Coro1c) from Mus musculus (Mouse).